We begin with the raw amino-acid sequence, 96 residues long: uncharacterized protein (96 aa).

The first 30 residues, 1 to 30 (MLILSVFCAVFYAFLTAIVANFSLKTLAIG), serve as a signal peptide directing secretion. Topologically, residues 31–54 (ATFVKSHLKSNPIPYGDLVADSLD) are extracellular. The chain crosses the membrane as a helical span at residues 55–75 (FGNITPTVTLLFAILIAVLAL). Residues 76-96 (KCEFSCSTSAPAGQASGRKVK) lie on the Cytoplasmic side of the membrane.

It localises to the membrane. This is an uncharacterized protein from Dictyostelium discoideum (Social amoeba).